Reading from the N-terminus, the 140-residue chain is Large ribosomal subunit protein uL16 (140 aa).

The protein belongs to the universal ribosomal protein uL16 family. Part of the 50S ribosomal subunit.

Binds 23S rRNA and is also seen to make contacts with the A and possibly P site tRNAs. This Onion yellows phytoplasma (strain OY-M) protein is Large ribosomal subunit protein uL16.